A 158-amino-acid polypeptide reads, in one-letter code: Fibroblast growth factor 2 (158 aa).

A propeptide spanning residues 1–12 (MAAGAAGSITTL) is cleaved from the precursor. Position 39 (N39) interacts with heparin. The heparin-binding stretch occupies residues 131–147 (KRTGQYKPGPKTGPGQK).

It belongs to the heparin-binding growth factors family.

The protein resides in the secreted. It localises to the nucleus. In terms of biological role, acts as a ligand for FGFR1, FGFR2, FGFR3 and FGFR4. Also acts as an integrin ligand which is required for FGF2 signaling. Plays an important role in the regulation of cell survival, cell division, cell differentiation and cell migration. Functions as a potent mitogen in vitro. Can induce angiogenesis. The protein is Fibroblast growth factor 2 (FGF2) of Gallus gallus (Chicken).